We begin with the raw amino-acid sequence, 107 residues long: Thiosulfate sulfurtransferase GlpE (107 aa).

The Rhodanese domain occupies 16–104 (KKRDIVIADV…WKAHHPTSDA (89 aa)). Cysteine 64 functions as the Cysteine persulfide intermediate in the catalytic mechanism.

Belongs to the GlpE family.

The protein resides in the cytoplasm. The enzyme catalyses thiosulfate + hydrogen cyanide = thiocyanate + sulfite + 2 H(+). It catalyses the reaction thiosulfate + [thioredoxin]-dithiol = [thioredoxin]-disulfide + hydrogen sulfide + sulfite + 2 H(+). Functionally, transferase that catalyzes the transfer of sulfur from thiosulfate to thiophilic acceptors such as cyanide or dithiols. May function in a CysM-independent thiosulfate assimilation pathway by catalyzing the conversion of thiosulfate to sulfite, which can then be used for L-cysteine biosynthesis. The chain is Thiosulfate sulfurtransferase GlpE from Coxiella burnetii (strain CbuK_Q154) (Coxiella burnetii (strain Q154)).